Here is a 246-residue protein sequence, read N- to C-terminus: Transmembrane protein 41 homolog (246 aa).

A run of 6 helical transmembrane segments spans residues 12-32 (WLVL…YSNF), 68-88 (SVVL…AIPG), 101-123 (PFYV…CYTI), 159-179 (IFLR…SPVL), 182-202 (PLAP…FLYI), and 219-239 (SWSS…PILL).

This sequence belongs to the TMEM41 family.

Its subcellular location is the membrane. In Caenorhabditis elegans, this protein is Transmembrane protein 41 homolog (tag-175).